The following is an 813-amino-acid chain: Leucine--tRNA ligase (813 aa).

Residues 42–52 (PYTSGNLHIGH) carry the 'HIGH' region motif. A 'KMSKS' region motif is present at residues 580-584 (KMSKS). Lys-583 lines the ATP pocket.

Belongs to the class-I aminoacyl-tRNA synthetase family.

Its subcellular location is the cytoplasm. The enzyme catalyses tRNA(Leu) + L-leucine + ATP = L-leucyl-tRNA(Leu) + AMP + diphosphate. This chain is Leucine--tRNA ligase, found in Dehalococcoides mccartyi (strain CBDB1).